A 671-amino-acid chain; its full sequence is DNA ligase (671 aa).

NAD(+) contacts are provided by residues 36 to 40 (DAEYD), 85 to 86 (SL), and Glu-116. Lys-118 (N6-AMP-lysine intermediate) is an active-site residue. NAD(+) contacts are provided by Arg-139, Glu-176, Lys-292, and Lys-316. Cys-410, Cys-413, Cys-428, and Cys-434 together coordinate Zn(2+). In terms of domain architecture, BRCT spans 591-671 (QKGGRFQGMT…QFLAMFSEKE (81 aa)).

This sequence belongs to the NAD-dependent DNA ligase family. LigA subfamily. Mg(2+) is required as a cofactor. The cofactor is Mn(2+).

It carries out the reaction NAD(+) + (deoxyribonucleotide)n-3'-hydroxyl + 5'-phospho-(deoxyribonucleotide)m = (deoxyribonucleotide)n+m + AMP + beta-nicotinamide D-nucleotide.. DNA ligase that catalyzes the formation of phosphodiester linkages between 5'-phosphoryl and 3'-hydroxyl groups in double-stranded DNA using NAD as a coenzyme and as the energy source for the reaction. It is essential for DNA replication and repair of damaged DNA. This Acidithiobacillus ferrooxidans (strain ATCC 23270 / DSM 14882 / CIP 104768 / NCIMB 8455) (Ferrobacillus ferrooxidans (strain ATCC 23270)) protein is DNA ligase.